The following is an 80-amino-acid chain: Small ribosomal subunit protein bS18 (80 aa).

This sequence belongs to the bacterial ribosomal protein bS18 family. As to quaternary structure, part of the 30S ribosomal subunit. Forms a tight heterodimer with protein bS6.

Binds as a heterodimer with protein bS6 to the central domain of the 16S rRNA, where it helps stabilize the platform of the 30S subunit. This chain is Small ribosomal subunit protein bS18, found in Acholeplasma laidlawii (strain PG-8A).